The chain runs to 226 residues: MGRSRKNFLSLLENDKVGIFCAFDKDYNVFRAKIHNENLFSHLGFKDIEKCVFMDQIHSHKVIIYDENLKNLSCDGLISKEKNIALCVLSADCLPLILYHESGIIAALHSGRKGSFENILKECVDQITMQNSHLDKNKFHLFILPGICAKNYEIDGEILEFAKKEFKEFVQDDKLDLKALVKFQAQNLGIENIKDCGICSFDDESFFSYRRDKTTKRFVSVVYLKD.

Residues His58, Cys93, and His109 each contribute to the Zn(2+) site.

Belongs to the purine nucleoside phosphorylase YfiH/LACC1 family. In terms of assembly, homodimer. Cu(2+) serves as cofactor. It depends on Zn(2+) as a cofactor.

The catalysed reaction is adenosine + phosphate = alpha-D-ribose 1-phosphate + adenine. The enzyme catalyses S-methyl-5'-thioadenosine + phosphate = 5-(methylsulfanyl)-alpha-D-ribose 1-phosphate + adenine. It carries out the reaction inosine + phosphate = alpha-D-ribose 1-phosphate + hypoxanthine. It catalyses the reaction adenosine + H2O + H(+) = inosine + NH4(+). Its function is as follows. Purine nucleoside enzyme that catalyzes the phosphorolysis of adenosine and inosine nucleosides, yielding D-ribose 1-phosphate and the respective free bases, adenine and hypoxanthine. Also catalyzes the phosphorolysis of S-methyl-5'-thioadenosine into adenine and S-methyl-5-thio-alpha-D-ribose 1-phosphate. Also has adenosine deaminase activity. The sequence is that of Purine nucleoside phosphorylase Cj1217c from Campylobacter jejuni subsp. jejuni serotype O:2 (strain ATCC 700819 / NCTC 11168).